The primary structure comprises 655 residues: Inactive serine protease scarface (655 aa).

Positions 1–24 (MSASHFREQLALCITLAVLAAASG) are cleaved as a signal peptide. 2 stretches are compositionally biased toward polar residues: residues 213–225 (TQAPFRPQPTTAV) and 237–252 (PSTTQHPSYEKVQTSR). Positions 213-319 (TQAPFRPQPT…QPSNQKPIYR (107 aa)) are disordered. The interval 343-407 (KCASALVCTS…PNYVDPWPVN (65 aa)) is CLIP. Disulfide bonds link Cys-344–Cys-394, Cys-350–Cys-383, Cys-356–Cys-395, Cys-450–Cys-466, Cys-547–Cys-605, Cys-579–Cys-587, and Cys-595–Cys-623. Positions 421-644 (PTGVKDLDAN…DIKWINTAFA (224 aa)) constitute a Peptidase S1 domain.

The protein belongs to the peptidase S1 family.

It is found in the secreted. Inactive serine protease that plays a role in germ-band retraction and dorsal closure morphogenesis in embryogenesis; contributes to amnioserosa attachment and epithelial apico-basal polarity by regulating the localization of laminin LanA on the apical side of the amnioserosa epithelium. Contributes to epithelial morphogenesis probably by regulating the bsk/JNK pathway, as part of a negative-feedback loop, and by modulating the cross-talk between the Egfr, bsk/JNK and dpp signal transduction pathways. In larval development, antagonizes the morphogenetic movements controlled by the bsk/JNK signaling including male genitalia formation and thorax development. The polypeptide is Inactive serine protease scarface (Drosophila melanogaster (Fruit fly)).